The sequence spans 205 residues: Ribosomal RNA large subunit methyltransferase E (205 aa).

Gly60, Trp62, Asp80, Asp96, and Asp121 together coordinate S-adenosyl-L-methionine. Lys161 (proton acceptor) is an active-site residue.

It belongs to the class I-like SAM-binding methyltransferase superfamily. RNA methyltransferase RlmE family.

It is found in the cytoplasm. It catalyses the reaction uridine(2552) in 23S rRNA + S-adenosyl-L-methionine = 2'-O-methyluridine(2552) in 23S rRNA + S-adenosyl-L-homocysteine + H(+). In terms of biological role, specifically methylates the uridine in position 2552 of 23S rRNA at the 2'-O position of the ribose in the fully assembled 50S ribosomal subunit. This Azoarcus sp. (strain BH72) protein is Ribosomal RNA large subunit methyltransferase E.